We begin with the raw amino-acid sequence, 134 residues long: Profilin-2 (134 aa).

An intrachain disulfide couples Cys-13 to Cys-118. Residues 84 to 100 (AVIRGKKGSGGITIKKT) carry the Involved in PIP2 interaction motif. A Phosphothreonine modification is found at Thr-114.

This sequence belongs to the profilin family. As to quaternary structure, occurs in many kinds of cells as a complex with monomeric actin in a 1:1 ratio. Phosphorylated by MAP kinases.

The protein localises to the cytoplasm. The protein resides in the cytoskeleton. Binds to actin and affects the structure of the cytoskeleton. At high concentrations, profilin prevents the polymerization of actin, whereas it enhances it at low concentrations. By binding to PIP2, it inhibits the formation of IP3 and DG. This is Profilin-2 (PRO2) from Olea europaea (Common olive).